A 515-amino-acid chain; its full sequence is MSSTKKPLVLTILDGYGHREEQQDNAILNAKTPVMDVLWQQQPHTLIAASGLDVGLPDGQMGNSEVGHVNLGAGRIVYQDLTRLDKEIKDGDFFTNPTLTAAVDNAVKTGKAVHIMGLLSAGGVHSHEDHIMAMVELAAKRGATAIYLHAFLDGRDTPPRSAESSLKRFTAKFAELGNGRIASIIGRYYAMDRDNRWDRVQLAYDLLTQAKGEFTADNAVAGLQAAYARGENDEFVKPTVIQATGEADAAMNEGDTLIFMNFRADRVRQITRTFVNADFDGFKRDKVVNFGDFIMLTEYAADIKVACAYPPASLTNTFGEWLMKHDKTQLRISETEKYAHVTFFYNGGVEEPFKGEDRILINSPKVATYDLQPEMSSAELTEKLVSAIGSGKYDVIICNYPNGDMVGHTGDYDAAVKAVETLDNCIEQVVAAVKAADGQLLITADHGNAEQMRDPATGQAHTAHTSLPVPLIYVGNKAVKAVEGGKLSDIAPTMLSLMEMEIPQEMTGKPLFIVE.

Residues Asp-14 and Ser-64 each coordinate Mn(2+). Ser-64 acts as the Phosphoserine intermediate in catalysis. Substrate is bound by residues His-125, 155–156 (RD), Arg-187, Arg-193, 263–266 (RADR), and Lys-337. 5 residues coordinate Mn(2+): Asp-404, His-408, Asp-445, His-446, and His-464.

The protein belongs to the BPG-independent phosphoglycerate mutase family. As to quaternary structure, monomer. Mn(2+) is required as a cofactor.

It carries out the reaction (2R)-2-phosphoglycerate = (2R)-3-phosphoglycerate. The protein operates within carbohydrate degradation; glycolysis; pyruvate from D-glyceraldehyde 3-phosphate: step 3/5. Catalyzes the interconversion of 2-phosphoglycerate and 3-phosphoglycerate. The protein is 2,3-bisphosphoglycerate-independent phosphoglycerate mutase of Yersinia pseudotuberculosis serotype O:1b (strain IP 31758).